The following is a 599-amino-acid chain: Major centromere autoantigen B (599 aa).

G2 is modified (n,N,N-trimethylglycine; alternate). G2 is subject to N,N-dimethylglycine; alternate. G2 bears the N-methylglycine; alternate mark. Residues 2–52 (GPKRRQLTFREKSRIIQEVEENPDLRKGEIARRFNIPPSTLSTILKNKRAI) form the HTH psq-type domain. 2 DNA-binding regions (H-T-H motif) span residues 28–48 (KGEI…ILKN) and 97–129 (GIIL…FRRR). Positions 65–136 (CRKTNKLSPY…RRRHGVVSCS (72 aa)) constitute an HTH CENPB-type domain. The disordered stretch occupies residues 143 to 184 (ARNAAPRTPAAPASPAAVPSEGSGGSTTGWRAREEQPPSVAE). A compositionally biased stretch (low complexity) spans 144 to 159 (RNAAPRTPAAPASPAA). Residues S156 and S165 each carry the phosphoserine modification. A Glycyl lysine isopeptide (Lys-Gly) (interchain with G-Cter in SUMO2) cross-link involves residue K246. Disordered regions lie at residues 387-475 (AGFG…EAED) and 495-544 (EAQC…VPSF). 2 positions are modified to phosphothreonine: T396 and T398. 2 stretches are compositionally biased toward acidic residues: residues 405 to 475 (GEEE…EAED) and 506 to 538 (GGED…DGDE). The tract at residues 536–599 (GDEVPVPSFG…AGVRGLGHQS (64 aa)) is homodimerization.

As to quaternary structure, antiparallel homodimer. Interacts with CENPT. Identified in a centromere complex containing histones H2A, H2B and H4, and at least CENPA, CENPB, CENPC, CENPT, CENPN, HJURP, SUPT16H, SSRP1 and RSF1. Post-translationally, poly-ADP-ribosylated by PARP1. In terms of processing, N-terminally methylated by METTL11A/NTM1. Alpha-N-methylation is stimulated in response to extracellular stimuli, including increased cell density and heat shock, and seems to facilitate binding to CENP-B boxes. Chromatin-bound CENP-B is primarily trimethylated.

It localises to the nucleus. It is found in the chromosome. Its subcellular location is the centromere. Its function is as follows. Interacts with centromeric heterochromatin in chromosomes and binds to a specific 17 bp subset of alphoid satellite DNA, called the CENP-B box. May organize arrays of centromere satellite DNA into a higher-order structure which then directs centromere formation and kinetochore assembly in mammalian chromosomes. The chain is Major centromere autoantigen B (CENPB) from Homo sapiens (Human).